A 27-amino-acid polypeptide reads, in one-letter code: U18-ctenitoxin-Co1a (27 aa).

The protein belongs to the u18-CNTX family. Expressed by the venom gland.

The protein localises to the secreted. Its function is as follows. Not toxic to mice by intracerebroventricular injection. This is U18-ctenitoxin-Co1a from Ctenus ornatus (Brazilian spider).